A 28-amino-acid chain; its full sequence is Chassatide C11 (28 aa).

3 cysteine pairs are disulfide-bonded: C3–C19, C7–C21, and C12–C26. M16 bears the Methionine sulfoxide; in form chassatide chaC11A mark.

Belongs to the cyclotide family. Bracelet subfamily. In terms of tissue distribution, expressed in fruit, pedicel and stem but not in leaf and root (at protein level).

Functionally, chassatide C11: Probably participates in a plant defense mechanism. Active against E.coli ATCC 25922 (MIC=8.5 uM) but not against S.aureus ATCC 12600 or S.epidermidis ATCC 14990. Has cytotoxic and hemolytic activity. Its function is as follows. Chassatide C11A: Probably participates in a plant defense mechanism. Has no activity against bacteria up to a concentration of 80 uM. Has no cytotoxic and no hemolytic activity. In Chassalia chartacea (Chassalia curviflora), this protein is Chassatide C11.